The primary structure comprises 147 residues: Myoglobin (147 aa).

The Globin domain maps to 2–141; it reads ADFDAVLKCW…VIADLEANYK (140 aa). His60 lines the nitrite pocket. His60 provides a ligand contact to O2. His89 is a heme b binding site.

The protein belongs to the globin family. As to quaternary structure, monomeric.

Its subcellular location is the cytoplasm. It localises to the sarcoplasm. It catalyses the reaction Fe(III)-heme b-[protein] + nitric oxide + H2O = Fe(II)-heme b-[protein] + nitrite + 2 H(+). The enzyme catalyses H2O2 + AH2 = A + 2 H2O. Its function is as follows. Monomeric heme protein which primary function is to store oxygen and facilitate its diffusion within muscle tissues. Reversibly binds oxygen through a pentacoordinated heme iron and enables its timely and efficient release as needed during periods of heightened demand. Depending on the oxidative conditions of tissues and cells, and in addition to its ability to bind oxygen, it also has a nitrite reductase activity whereby it regulates the production of bioactive nitric oxide. Under stress conditions, like hypoxia and anoxia, it also protects cells against reactive oxygen species thanks to its pseudoperoxidase activity. The chain is Myoglobin (mb) from Auxis rochei (Bullet tuna).